We begin with the raw amino-acid sequence, 263 residues long: tRNA dimethylallyltransferase (263 aa).

It belongs to the IPP transferase family. Monomer. Requires Mg(2+) as cofactor.

It catalyses the reaction adenosine(37) in tRNA + dimethylallyl diphosphate = N(6)-dimethylallyladenosine(37) in tRNA + diphosphate. Its function is as follows. Catalyzes the transfer of a dimethylallyl group onto the adenine at position 37 in tRNAs that read codons beginning with uridine, leading to the formation of N6-(dimethylallyl)adenosine (i(6)A). This Leifsonia xyli subsp. xyli (strain CTCB07) protein is tRNA dimethylallyltransferase.